The sequence spans 254 residues: Alcohol dehydrogenase (254 aa).

M1 bears the N-acetylmethionine mark. NAD(+) is bound at residue 10-33 (FVAALGGIGLDTSRELVKRNLKNF). Residue S138 coordinates substrate. The active-site Proton acceptor is Y151.

It belongs to the short-chain dehydrogenases/reductases (SDR) family. In terms of assembly, homodimer.

The enzyme catalyses a primary alcohol + NAD(+) = an aldehyde + NADH + H(+). The catalysed reaction is a secondary alcohol + NAD(+) = a ketone + NADH + H(+). The sequence is that of Alcohol dehydrogenase (Adh) from Drosophila lebanonensis (Fruit fly).